The primary structure comprises 200 residues: LexA repressor (200 aa).

The segment at residues 28-48 is a DNA-binding region (H-T-H motif); sequence RAEIAQHFGFSSPNAAEQHLK. Residues Ser-117 and Lys-154 each act as for autocatalytic cleavage activity in the active site.

This sequence belongs to the peptidase S24 family. In terms of assembly, homodimer.

It carries out the reaction Hydrolysis of Ala-|-Gly bond in repressor LexA.. Functionally, represses a number of genes involved in the response to DNA damage (SOS response), including recA and lexA. In the presence of single-stranded DNA, RecA interacts with LexA causing an autocatalytic cleavage which disrupts the DNA-binding part of LexA, leading to derepression of the SOS regulon and eventually DNA repair. The chain is LexA repressor from Thiobacillus denitrificans (strain ATCC 25259 / T1).